The chain runs to 594 residues: Probable glucose transporter rco-3 (594 aa).

Topologically, residues 1–13 (MAIFAMGWQKPDN) are cytoplasmic. Residues 14 to 34 (VAGSSAPAIMVGLFVATGGLL) traverse the membrane as a helical segment. Residues 35-73 (LGYDTGTINGILAMKSFKDHFSTGYIDGNGQPGIYPKES) lie on the Extracellular side of the membrane. A helical transmembrane segment spans residues 74–94 (ALIVAMLSAGTAIGALLAAPL). The Cytoplasmic portion of the chain corresponds to 95 to 103 (GDHYGRRRS). Residues 104 to 124 (LIGAIGIFVIGAILQVCAYNI) traverse the membrane as a helical segment. Residue Asp-125 is a topological domain, extracellular. A helical transmembrane segment spans residues 126–146 (LLVAGRTVAGVGIGIVSVLVP). Residues 147-159 (LYQSEMAPKWIRG) lie on the Cytoplasmic side of the membrane. Residues 160 to 180 (TLVCTYQLSITMGLLAAAVVN) traverse the membrane as a helical segment. The Extracellular portion of the chain corresponds to 181-193 (ILTYKLKTAAAYR). Residues 194 to 214 (VPIGLQLTWACVLALGLTVLP) traverse the membrane as a helical segment. The Cytoplasmic portion of the chain corresponds to 215–293 (ETPRYLIKRG…TGCCLQMLQQ (79 aa)). Residues 294 to 314 (LTGVNFIMYYGTTFFNNAGVG) traverse the membrane as a helical segment. Over 315 to 318 (NPFK) the chain is Extracellular. A helical membrane pass occupies residues 319 to 339 (ISLIMQVINTASTIPGLFVVE). The Cytoplasmic segment spans residues 340–345 (SWGRRR). The helical transmembrane segment at 346-366 (LLMVGAIGMAICQLLIAAFAT) threads the bilayer. The Extracellular segment spans residues 367 to 378 (ASGSNNLSAQNK). A glycan (N-linked (GlcNAc...) asparagine) is linked at Asn-372. Residues 379–403 (VLITFVAIYIFFFAASWGPVVWVVT) form a helical membrane-spanning segment. The Cytoplasmic portion of the chain corresponds to 404-415 (SEIYPLKVRAKS). The helical transmembrane segment at 416-436 (MSITTASNWFLNFGIAYGTPY) threads the bilayer. At 437–454 (MQTNSAASDESSIDLGSK) the chain is on the extracellular side. The chain crosses the membrane as a helical span at residues 455-475 (VFFVWGAFCIVAVGFVWCMVY). Residues 476 to 594 (ETSKISLEQI…ASLGNIDLSY (119 aa)) lie on the Cytoplasmic side of the membrane. The segment at 512-594 (DLGFSDGGIP…ASLGNIDLSY (83 aa)) is disordered. Residues 524–576 (QQLQQQPQQPQQQQQQHHQQQQHQLQVDLQQSQSRTSNSSTSQTDTGGSNNTG) are compositionally biased toward low complexity.

Belongs to the major facilitator superfamily. Sugar transporter (TC 2.A.1.1) family.

It is found in the membrane. Probable glucose transporter. Involved in sugar transport, carbon catabolite repression, and initiation of conidiophore development. The sequence is that of Probable glucose transporter rco-3 (rco-3) from Neurospora crassa (strain ATCC 24698 / 74-OR23-1A / CBS 708.71 / DSM 1257 / FGSC 987).